Reading from the N-terminus, the 190-residue chain is Potassium-transporting ATPase KdpC subunit (190 aa).

Residues 10–30 (LLVFLTILTGGVYPLATTVLG) form a helical membrane-spanning segment.

This sequence belongs to the KdpC family. As to quaternary structure, the system is composed of three essential subunits: KdpA, KdpB and KdpC.

The protein localises to the cell inner membrane. Its function is as follows. Part of the high-affinity ATP-driven potassium transport (or Kdp) system, which catalyzes the hydrolysis of ATP coupled with the electrogenic transport of potassium into the cytoplasm. This subunit acts as a catalytic chaperone that increases the ATP-binding affinity of the ATP-hydrolyzing subunit KdpB by the formation of a transient KdpB/KdpC/ATP ternary complex. This chain is Potassium-transporting ATPase KdpC subunit, found in Cronobacter sakazakii (strain ATCC BAA-894) (Enterobacter sakazakii).